Reading from the N-terminus, the 621-residue chain is Elongation factor 4 (621 aa).

The region spanning 21 to 203 (DLIRNICIIA…AIVKRVPPPK (183 aa)) is the tr-type G domain. GTP-binding positions include 33 to 38 (DHGKTT) and 150 to 153 (NKID).

It belongs to the TRAFAC class translation factor GTPase superfamily. Classic translation factor GTPase family. LepA subfamily.

It localises to the cell inner membrane. It carries out the reaction GTP + H2O = GDP + phosphate + H(+). Its function is as follows. Required for accurate and efficient protein synthesis under certain stress conditions. May act as a fidelity factor of the translation reaction, by catalyzing a one-codon backward translocation of tRNAs on improperly translocated ribosomes. Back-translocation proceeds from a post-translocation (POST) complex to a pre-translocation (PRE) complex, thus giving elongation factor G a second chance to translocate the tRNAs correctly. Binds to ribosomes in a GTP-dependent manner. This chain is Elongation factor 4, found in Thermotoga maritima (strain ATCC 43589 / DSM 3109 / JCM 10099 / NBRC 100826 / MSB8).